The following is a 79-amino-acid chain: Short neurotoxin 2 (79 aa).

The first 19 residues, Pro-1–Thr-19, serve as a signal peptide directing secretion. 4 disulfides stabilise this stretch: Cys-22–Cys-41, Cys-36–Cys-58, Cys-60–Cys-71, and Cys-72–Cys-77.

Belongs to the three-finger toxin family. Short-chain subfamily. Type I alpha-neurotoxin sub-subfamily. As to expression, expressed by the venom gland.

Its subcellular location is the secreted. Functionally, binds to muscle nicotinic acetylcholine receptor (nAChR) and inhibit acetylcholine from binding to the receptor, thereby impairing neuromuscular transmission. The chain is Short neurotoxin 2 from Hydrophis cyanocinctus (Asian annulated sea snake).